Consider the following 390-residue polypeptide: S-adenosylmethionine:tRNA ribosyltransferase-isomerase (390 aa).

Positions 1–22 (MTQPLSQDQHDSSSNMPTDNAE) are disordered.

The protein belongs to the QueA family. In terms of assembly, monomer.

It localises to the cytoplasm. It carries out the reaction 7-aminomethyl-7-carbaguanosine(34) in tRNA + S-adenosyl-L-methionine = epoxyqueuosine(34) in tRNA + adenine + L-methionine + 2 H(+). Its pathway is tRNA modification; tRNA-queuosine biosynthesis. Transfers and isomerizes the ribose moiety from AdoMet to the 7-aminomethyl group of 7-deazaguanine (preQ1-tRNA) to give epoxyqueuosine (oQ-tRNA). The protein is S-adenosylmethionine:tRNA ribosyltransferase-isomerase of Psychrobacter sp. (strain PRwf-1).